Here is a 545-residue protein sequence, read N- to C-terminus: Degenerin-like protein asic-2 (545 aa).

At 1–34 the chain is on the cytoplasmic side; sequence MRGGGFVQIFKDFSNWSTVAVVPHVANANNKISR. The helical transmembrane segment at 35–55 threads the bilayer; that stretch reads IFWIAIFLFVLGMFAYELYIL. Residues 56–457 are Extracellular-facing; that stretch reads IAKFFSYPAT…NVINDLGGQA (402 aa). A disulfide bridge links Cys-83 with Cys-191. The N-linked (GlcNAc...) asparagine glycan is linked to Asn-201. 5 disulfide bridges follow: Cys-284–Cys-370, Cys-305–Cys-366, Cys-309–Cys-364, Cys-318–Cys-343, and Cys-320–Cys-334. Residue Asn-350 is glycosylated (N-linked (GlcNAc...) asparagine). Residues 458–478 form a helical membrane-spanning segment; sequence GLWLGLSVISVVEMTGLMLVM. Residues 462-464 carry the GAS motif; ion selectivity filter motif; sequence GLS. Over 479–545 the chain is Cytoplasmic; it reads GAFCVTGGAI…NKGDEEKKKK (67 aa). Composition is skewed to basic and acidic residues over residues 514-523 and 534-545; these read DHLEKKHGEM and IENKGDEEKKKK. The segment at 514-545 is disordered; sequence DHLEKKHGEMESGSDGEVDDIENKGDEEKKKK.

This sequence belongs to the amiloride-sensitive sodium channel (TC 1.A.6) family. Can form homotrimers. Heterotrimer; forms functional heterotrimers producing channel with different properties.

The protein resides in the cell membrane. It carries out the reaction Na(+)(in) = Na(+)(out). Inhibited by the diuretic drug amiloride. In terms of biological role, could form pH-gated heterotrimeric sodium channels that act as postsynaptic excitatory sensors in the nervous system, generating rapid, transient inward currents that fully desensitize upon extracellular acidification. The polypeptide is Degenerin-like protein asic-2 (asic-2) (Caenorhabditis elegans).